The sequence spans 323 residues: PI-PLC X domain-containing protein 1 (323 aa).

The PI-PLC X-box domain maps to 30–206; the sequence is RLWDVPLHHL…QVIVSYEDES (177 aa).

As to expression, widely expressed.

It localises to the cytoplasm. In Homo sapiens (Human), this protein is PI-PLC X domain-containing protein 1 (PLCXD1).